Consider the following 208-residue polypeptide: Uracil phosphoribosyltransferase (208 aa).

5-phospho-alpha-D-ribose 1-diphosphate-binding positions include Arg78, Arg103, and 130-138; that span reads DPMLATGHS. Residues Ile193 and 198–200 contribute to the uracil site; that span reads GDA. Asp199 lines the 5-phospho-alpha-D-ribose 1-diphosphate pocket.

Belongs to the UPRTase family. Mg(2+) serves as cofactor.

It catalyses the reaction UMP + diphosphate = 5-phospho-alpha-D-ribose 1-diphosphate + uracil. It participates in pyrimidine metabolism; UMP biosynthesis via salvage pathway; UMP from uracil: step 1/1. Allosterically activated by GTP. Functionally, catalyzes the conversion of uracil and 5-phospho-alpha-D-ribose 1-diphosphate (PRPP) to UMP and diphosphate. This Brucella anthropi (strain ATCC 49188 / DSM 6882 / CCUG 24695 / JCM 21032 / LMG 3331 / NBRC 15819 / NCTC 12168 / Alc 37) (Ochrobactrum anthropi) protein is Uracil phosphoribosyltransferase.